A 157-amino-acid chain; its full sequence is Phosphopantetheine adenylyltransferase (157 aa).

S8 is a substrate binding site. Residues 8–9 and H16 each bind ATP; that span reads SF. Residues K40, T72, and R86 each contribute to the substrate site. Residues 87–89, E97, and 122–128 each bind ATP; these read GLR and HSFLSSS.

The protein belongs to the bacterial CoaD family. In terms of assembly, homohexamer. It depends on Mg(2+) as a cofactor.

It localises to the cytoplasm. It carries out the reaction (R)-4'-phosphopantetheine + ATP + H(+) = 3'-dephospho-CoA + diphosphate. The protein operates within cofactor biosynthesis; coenzyme A biosynthesis; CoA from (R)-pantothenate: step 4/5. Its function is as follows. Reversibly transfers an adenylyl group from ATP to 4'-phosphopantetheine, yielding dephospho-CoA (dPCoA) and pyrophosphate. This is Phosphopantetheine adenylyltransferase from Prochlorococcus marinus (strain MIT 9303).